The chain runs to 231 residues: Cell cycle transcriptional regulator CtrA (231 aa).

The region spanning 2–116 (RVLLIEDDSA…EMIARIHAVV (115 aa)) is the Response regulatory domain. Asp51 carries the post-translational modification 4-aspartylphosphate. The ompR/PhoB-type DNA-binding region spans 124 to 223 (QSVIKTGDIV…VWGRGYVLRD (100 aa)).

In terms of processing, phosphorylated by CckA.

Functionally, forms part of a two-component regulatory system CtrA/CckA that controls multiple events in the cell cycle, including cell division, stalk synthesis and cell cycle-specific transcription. Binds to a group of cell cycle-regulated promoters critical for DNA replication, DNA methylation, and class II flagellar biogenesis. The sequence is that of Cell cycle transcriptional regulator CtrA (ctrA) from Caulobacter vibrioides (strain ATCC 19089 / CIP 103742 / CB 15) (Caulobacter crescentus).